A 171-amino-acid chain; its full sequence is Large ribosomal subunit protein uL10 (171 aa).

It belongs to the universal ribosomal protein uL10 family. In terms of assembly, part of the ribosomal stalk of the 50S ribosomal subunit. The N-terminus interacts with L11 and the large rRNA to form the base of the stalk. The C-terminus forms an elongated spine to which L12 dimers bind in a sequential fashion forming a multimeric L10(L12)X complex.

Its function is as follows. Forms part of the ribosomal stalk, playing a central role in the interaction of the ribosome with GTP-bound translation factors. This is Large ribosomal subunit protein uL10 from Cereibacter sphaeroides (strain ATCC 17023 / DSM 158 / JCM 6121 / CCUG 31486 / LMG 2827 / NBRC 12203 / NCIMB 8253 / ATH 2.4.1.) (Rhodobacter sphaeroides).